A 559-amino-acid polypeptide reads, in one-letter code: Urocanate hydratase (559 aa).

Residues 53 to 54, Q131, 177 to 179, E197, R202, 243 to 244, 264 to 268, 274 to 275, and Y323 contribute to the NAD(+) site; these read GG, GMG, NA, QTSAH, and YL. The active site involves C411. Position 493 (G493) interacts with NAD(+).

It belongs to the urocanase family. NAD(+) serves as cofactor.

It is found in the cytoplasm. It catalyses the reaction 4-imidazolone-5-propanoate = trans-urocanate + H2O. Its pathway is amino-acid degradation; L-histidine degradation into L-glutamate; N-formimidoyl-L-glutamate from L-histidine: step 2/3. Its function is as follows. Catalyzes the conversion of urocanate to 4-imidazolone-5-propionate. In Pseudomonas aeruginosa (strain ATCC 15692 / DSM 22644 / CIP 104116 / JCM 14847 / LMG 12228 / 1C / PRS 101 / PAO1), this protein is Urocanate hydratase.